The chain runs to 822 residues: LPS-assembly protein LptD (822 aa).

The N-terminal stretch at 1–37 is a signal peptide; that stretch reads MRRASRSPFILSPVAHAVSRLVLCATLGWTYAGSGHA. Residues 38-97 form a disordered region; that stretch reads QVPAPAGGSEVPLGARPPASAPVAAQQETPLKLKSSPALAEEVPNGPGDEGPTFVFGDSV.

The protein belongs to the LptD family. In terms of assembly, component of the lipopolysaccharide transport and assembly complex. Interacts with LptE and LptA.

It localises to the cell outer membrane. Together with LptE, is involved in the assembly of lipopolysaccharide (LPS) at the surface of the outer membrane. In Polaromonas sp. (strain JS666 / ATCC BAA-500), this protein is LPS-assembly protein LptD.